The sequence spans 38 residues: Toxic protein TimP (38 aa).

A transmembrane span lies at residues 1 to 20 (MKVRCFCVVLLVSGTLCLHA).

The protein belongs to the TimP toxin family.

The protein resides in the cell inner membrane. In terms of biological role, toxic component of a probable type I toxin-antitoxin (TA) system. Neutralized by sRNA antitoxin TimR which binds to the 5' UTR of timP mRNA and inhibits translation. When TimP is expressed from its promoter in the absence of antitoxin leads to mild cell stress; overexpression in situ is toxic to the cell and causes membrane leakage. The antitoxin gene is encoded immediately upstream and transcribed divergently from the toxin gene; antitoxin RNA is less stable than timP mRNA. The protein is Toxic protein TimP of Salmonella typhimurium (strain SL1344).